Reading from the N-terminus, the 177-residue chain is Large ribosomal subunit protein uL6 (177 aa).

Belongs to the universal ribosomal protein uL6 family. As to quaternary structure, part of the 50S ribosomal subunit.

This protein binds to the 23S rRNA, and is important in its secondary structure. It is located near the subunit interface in the base of the L7/L12 stalk, and near the tRNA binding site of the peptidyltransferase center. The protein is Large ribosomal subunit protein uL6 of Pasteurella multocida (strain Pm70).